The sequence spans 165 residues: Phosphopantetheine adenylyltransferase (165 aa).

It belongs to the eukaryotic CoaD family.

It is found in the cytoplasm. It catalyses the reaction (R)-4'-phosphopantetheine + ATP + H(+) = 3'-dephospho-CoA + diphosphate. It functions in the pathway cofactor biosynthesis; coenzyme A biosynthesis. Reversibly transfers an adenylyl group from ATP to 4'-phosphopantetheine, yielding dephospho-CoA (dPCoA) and pyrophosphate. The protein is Phosphopantetheine adenylyltransferase of Thermococcus kodakarensis (strain ATCC BAA-918 / JCM 12380 / KOD1) (Pyrococcus kodakaraensis (strain KOD1)).